Here is a 506-residue protein sequence, read N- to C-terminus: Histidine ammonia-lyase (506 aa).

A cross-link (5-imidazolinone (Ala-Gly)) is located at residues 142–144 (ASG). Serine 143 carries the 2,3-didehydroalanine (Ser) modification.

The protein belongs to the PAL/histidase family. Post-translationally, contains an active site 4-methylidene-imidazol-5-one (MIO), which is formed autocatalytically by cyclization and dehydration of residues Ala-Ser-Gly.

The protein resides in the cytoplasm. It carries out the reaction L-histidine = trans-urocanate + NH4(+). Its pathway is amino-acid degradation; L-histidine degradation into L-glutamate; N-formimidoyl-L-glutamate from L-histidine: step 1/3. This is Histidine ammonia-lyase from Bacillus cereus (strain B4264).